The chain runs to 1004 residues: Centriolar coiled-coil protein of 110 kDa (1004 aa).

The interval 1-221 (MEEYEEFCEK…SCLAEVTPDP (221 aa)) is CEP97 binding. Residues 51–90 (EKRKKIQEEKQKALDVQSRKQANRKKALLTRVQEILENVQ) are a coiled coil. The calmodulin-binding stretch occupies residues 64 to 82 (LDVQSRKQANRKKALLTRV). Residues 67–82 (QSRKQANRKKALLTRV) are required for interaction with CEP290. Disordered regions lie at residues 147–194 (PVNN…SSAS) and 239–279 (RELS…APPM). Ser-170 bears the Phosphoserine mark. Residues 243–252 (SRSLRNSLKR) are compositionally biased toward low complexity. Positions 253–276 (SVNETHSDRENDAAKASDCVKEKA) are enriched in basic and acidic residues. Residues 349-564 (ENKVKSLKGP…QTQTSRQQMD (216 aa)) are interaction with CEP76. 3 positions are modified to phosphoserine: Ser-364, Ser-370, and Ser-398. The tract at residues 401–433 (GKEEAVDRTAPAAAETTNESETVPKSPTDLTGV) is disordered. Positions 415-433 (ETTNESETVPKSPTDLTGV) are enriched in polar residues. Phosphoserine is present on Ser-550. Positions 641–699 (QELLKSKMLAFEEMRKRLEEQHAQQLSLLIAEQEREQEQLQKEIEEQEKMLKEKAVTTD) form a coiled coil. 2 calmodulin-binding regions span residues 773–813 (GRAQ…DKLK) and 901–916 (VALS…RKKF). Positions 955-1004 (LSRQGTPKTSVKGVVQNRQKPSQSRVPNRAPVSGAYAGKTQRKRPNVATI) are disordered. Residues 970 to 980 (QNRQKPSQSRV) are compositionally biased toward polar residues. Positions 994 to 1004 (TQRKRPNVATI) are enriched in basic residues.

Interacts with CALM1, CETN2, CEP76, CEP104, CEP290 and TALPID3. Interacts with CEP97. Seems to associate with discrete CETN2, CEP97 and CEP290-containing complexes. Interacts with NEURL4 and CCNF; these interactions are not mutually exclusive and both lead to CCP110 ubiquitination and proteasome-dependent degradation. Via its interaction with NEURL4, may indirectly interact with HERC2. Interacts with KIF24, leading to its recruitment to centrioles. Interacts with USP20 and USP33. Interacts with MPHOSPH9. Interacts (via N-terminal region) with ENKD1 (via central region); ENKD1 competes with CEP97 for binding to CCP110, destabilizing the interaction between CP110 and CEP97 which promotes the removal of CCP110 and CEP97 from the mother centriole and allows the initiation of ciliogenesis. Post-translationally, phosphorylated by CDKs. Ubiquitinated by the SCF(CCNF) during G2 phase, leading to its degradation by the proteasome and preventing centrosome reduplication. Deubiquitinated by USP33 in S and G2/M phase, leading to stabilize CCP110 during the period which centrioles duplicate and elongate. Ubiquitinated by the EDVP complex, leading to its degradation.

The protein localises to the cytoplasm. It localises to the cytoskeleton. It is found in the microtubule organizing center. Its subcellular location is the centrosome. The protein resides in the centriole. The protein localises to the cilium basal body. In terms of biological role, necessary for centrosome duplication at different stages of procentriole formation. Acts as a key negative regulator of ciliogenesis in collaboration with CEP97 by capping the mother centriole thereby preventing cilia formation. Also involved in promoting ciliogenesis. May play a role in the assembly of the mother centriole subdistal appendages (SDA) thereby effecting the fusion of recycling endosomes to basal bodies during cilia formation. Required for correct spindle formation and has a role in regulating cytokinesis and genome stability via cooperation with CALM1 and CETN2. The chain is Centriolar coiled-coil protein of 110 kDa (Ccp110) from Mus musculus (Mouse).